We begin with the raw amino-acid sequence, 257 residues long: NAD-capped RNA hydrolase NudC (257 aa).

A substrate-binding site is contributed by arginine 69. Positions 98 and 101 each coordinate Zn(2+). Glutamate 111 serves as a coordination point for substrate. Cysteine 116 and cysteine 119 together coordinate Zn(2+). Tyrosine 124 is a binding site for substrate. Residues 125–248 enclose the Nudix hydrolase domain; it reads PQIAPCIIVA…TVARRLIEDT (124 aa). The a divalent metal cation site is built by alanine 158, glutamate 174, and glutamate 178. Positions 159-180 match the Nudix box motif; sequence GFVEVGETLEQAVAREVMEESG. 192–199 contributes to the substrate binding site; it reads QPWPFPQS. Residue glutamate 219 coordinates a divalent metal cation. Residue alanine 241 coordinates substrate.

This sequence belongs to the Nudix hydrolase family. NudC subfamily. Homodimer. Mg(2+) serves as cofactor. The cofactor is Mn(2+). It depends on Zn(2+) as a cofactor.

The enzyme catalyses a 5'-end NAD(+)-phospho-ribonucleoside in mRNA + H2O = a 5'-end phospho-adenosine-phospho-ribonucleoside in mRNA + beta-nicotinamide D-ribonucleotide + 2 H(+). The catalysed reaction is NAD(+) + H2O = beta-nicotinamide D-ribonucleotide + AMP + 2 H(+). It catalyses the reaction NADH + H2O = reduced beta-nicotinamide D-ribonucleotide + AMP + 2 H(+). MRNA decapping enzyme that specifically removes the nicotinamide adenine dinucleotide (NAD) cap from a subset of mRNAs by hydrolyzing the diphosphate linkage to produce nicotinamide mononucleotide (NMN) and 5' monophosphate mRNA. The NAD-cap is present at the 5'-end of some mRNAs and stabilizes RNA against 5'-processing. Has preference for mRNAs with a 5'-end purine. Catalyzes the hydrolysis of a broad range of dinucleotide pyrophosphates. This is NAD-capped RNA hydrolase NudC from Citrobacter koseri (strain ATCC BAA-895 / CDC 4225-83 / SGSC4696).